Consider the following 610-residue polypeptide: Elongation factor 4 (610 aa).

The tr-type G domain maps to 15–197 (KSIRNFSIIA…RIINDIPYPK (183 aa)). Residues 27–32 (DHGKST) and 144–147 (NKID) contribute to the GTP site.

Belongs to the TRAFAC class translation factor GTPase superfamily. Classic translation factor GTPase family. LepA subfamily.

The protein localises to the cell membrane. The enzyme catalyses GTP + H2O = GDP + phosphate + H(+). Required for accurate and efficient protein synthesis under certain stress conditions. May act as a fidelity factor of the translation reaction, by catalyzing a one-codon backward translocation of tRNAs on improperly translocated ribosomes. Back-translocation proceeds from a post-translocation (POST) complex to a pre-translocation (PRE) complex, thus giving elongation factor G a second chance to translocate the tRNAs correctly. Binds to ribosomes in a GTP-dependent manner. In Buchnera aphidicola subsp. Acyrthosiphon pisum (strain 5A), this protein is Elongation factor 4.